Reading from the N-terminus, the 893-residue chain is DNA gyrase subunit A (893 aa).

The 467-residue stretch at 35 to 501 (LPDVRDGLKP…GLEDLEDEDL (467 aa)) folds into the Topo IIA-type catalytic domain. Catalysis depends on tyrosine 123, which acts as the O-(5'-phospho-DNA)-tyrosine intermediate. Positions 528-534 (QNRGGRG) match the GyrA-box motif. A disordered region spans residues 810–893 (VNEEDDNEEN…ASDNEEDSDE (84 aa)). 2 stretches are compositionally biased toward acidic residues: residues 812–821 (EEDDNEENAD) and 852–862 (DAEMESVESPE). Residues 863-879 (NDDRIDIRQDFMDRVNE) are compositionally biased toward basic and acidic residues. Positions 880 to 893 (DIESASDNEEDSDE) are enriched in acidic residues.

The protein belongs to the type II topoisomerase GyrA/ParC subunit family. As to quaternary structure, heterotetramer, composed of two GyrA and two GyrB chains. In the heterotetramer, GyrA contains the active site tyrosine that forms a transient covalent intermediate with DNA, while GyrB binds cofactors and catalyzes ATP hydrolysis.

It is found in the cytoplasm. It carries out the reaction ATP-dependent breakage, passage and rejoining of double-stranded DNA.. In terms of biological role, a type II topoisomerase that negatively supercoils closed circular double-stranded (ds) DNA in an ATP-dependent manner to modulate DNA topology and maintain chromosomes in an underwound state. Negative supercoiling favors strand separation, and DNA replication, transcription, recombination and repair, all of which involve strand separation. Also able to catalyze the interconversion of other topological isomers of dsDNA rings, including catenanes and knotted rings. Type II topoisomerases break and join 2 DNA strands simultaneously in an ATP-dependent manner. This is DNA gyrase subunit A from Staphylococcus epidermidis (strain ATCC 35984 / DSM 28319 / BCRC 17069 / CCUG 31568 / BM 3577 / RP62A).